Consider the following 251-residue polypeptide: Outer membrane protein assembly factor BamD (251 aa).

The signal sequence occupies residues 1–19; it reads MKLTKLLSALLVIGLVLGG. Cys20 carries N-palmitoyl cysteine lipidation. A lipid anchor (S-diacylglycerol cysteine) is attached at Cys20. TPR repeat units lie at residues 33–66, 70–103, and 166–199; these read IATLYNEGIILLDKKKYKKAAEEFGKIFYQHPGN, PQAELMQAYSLFLAAQYEEAVDILNMFINLHPAN, and AGKEMMIGRFYLKKKNPMAAINRFEEVIDNYQTT.

It belongs to the BamD family. As to quaternary structure, part of the Bam complex.

It localises to the cell outer membrane. In terms of biological role, part of the outer membrane protein assembly complex, which is involved in assembly and insertion of beta-barrel proteins into the outer membrane. This chain is Outer membrane protein assembly factor BamD, found in Rickettsia prowazekii (strain Madrid E).